The sequence spans 24 residues: Humanin-like 9 (24 aa).

Belongs to the humanin family. As to expression, highly expressed in the kidney, heart muscle and testis.

The protein localises to the secreted. The protein resides in the cytoplasm. Its function is as follows. Plays a role as a neuroprotective and antiapoptotic factor. The chain is Humanin-like 9 from Homo sapiens (Human).